Consider the following 76-residue polypeptide: Adropin (76 aa).

The signal sequence occupies residues 1–33; the sequence is MGAAISQGALIAIVCNGLVGFLLLLLWVILCWA. Positions 41-76 are disordered; it reads VDSLSESSPNSSPGPCPEKAPPPQKPSHEGSYLLQP. Positions 52 to 65 are enriched in pro residues; that stretch reads SPGPCPEKAPPPQK.

As to expression, expressed in liver and brain.

It is found in the secreted. In terms of biological role, involved in the regulation of glucose homeostasis and lipid metabolism. The chain is Adropin (ENHO) from Homo sapiens (Human).